Consider the following 1011-residue polypeptide: Vacuolar membrane protease (1011 aa).

At 1–14 (MKLTKAVFRFRRTN) the chain is on the cytoplasmic side. Residues 15 to 35 (LSTLLVITYLVITTLYVWDHF) form a helical membrane-spanning segment. The Vacuolar segment spans residues 36–352 (RYHFTLPSDY…WFVVWSARSL (317 aa)). Zn(2+)-binding residues include His-149, Asp-161, Glu-194, Glu-219, and His-293. Residues 353–373 (FYWNCIILALFPSILAILFLV) traverse the membrane as a helical segment. At 374 to 390 (AYDMQLLKFNFWDAMLR) the chain is on the cytoplasmic side. The chain crosses the membrane as a helical span at residues 391–411 (LPVSVCLAYFCVKLFQVLVGQ). The Vacuolar portion of the chain corresponds to 412–420 (LNPYVFSRD). Residues 421–441 (YVSPILAEASMFIFMNYVILS) traverse the membrane as a helical segment. The Cytoplasmic portion of the chain corresponds to 442 to 451 (SWERLRPLRD). Residues 452-472 (FKTVALVEVSMVLWIYLISVT) form a helical membrane-spanning segment. Residues 473 to 487 (RWLRDSDYTATGLYP) are Vacuolar-facing. The helical transmembrane segment at 488–508 (FTIGYTFVSIGAIIGVFCATF) threads the bilayer. At 509 to 647 (KAKLNPEDDS…SILNYDWSIQ (139 aa)) the chain is on the cytoplasmic side. The disordered stretch occupies residues 534–585 (MQHQYQQHSQKHSNQHSPHHSTHHSAQHSVHHSPRQSIHQVPSSEQRQRDAS). Positions 542–567 (SQKHSNQHSPHHSTHHSAQHSVHHSP) are enriched in basic residues. Polar residues predominate over residues 568-578 (RQSIHQVPSSE). A helical transmembrane segment spans residues 648–668 (FMVVTPWVTYFTWICLDLIMG). At 669-681 (AMNQTIQESAKGT) the chain is on the vacuolar side. N-linked (GlcNAc...) asparagine glycosylation occurs at Asn-671. A helical transmembrane segment spans residues 682-702 (TFVTHMALIGSLLLSLPMLPF). Topologically, residues 703–708 (TYKLHS) are cytoplasmic. A helical membrane pass occupies residues 709-729 (FAGMLFLLLAVTTAVWTIVAP). The Vacuolar segment spans residues 730-1011 (PFTESSPLKL…MVSVTKYVEL (282 aa)). 3 N-linked (GlcNAc...) asparagine glycosylation sites follow: Asn-751, Asn-825, and Asn-854.

The protein belongs to the peptidase M28 family. Zn(2+) serves as cofactor.

It localises to the vacuole membrane. May be involved in vacuolar sorting and osmoregulation. This Eremothecium gossypii (strain ATCC 10895 / CBS 109.51 / FGSC 9923 / NRRL Y-1056) (Yeast) protein is Vacuolar membrane protease.